The following is a 122-amino-acid chain: Large ribosomal subunit protein uL22 (122 aa).

Belongs to the universal ribosomal protein uL22 family. As to quaternary structure, part of the 50S ribosomal subunit.

Its function is as follows. This protein binds specifically to 23S rRNA; its binding is stimulated by other ribosomal proteins, e.g. L4, L17, and L20. It is important during the early stages of 50S assembly. It makes multiple contacts with different domains of the 23S rRNA in the assembled 50S subunit and ribosome. In terms of biological role, the globular domain of the protein is located near the polypeptide exit tunnel on the outside of the subunit, while an extended beta-hairpin is found that lines the wall of the exit tunnel in the center of the 70S ribosome. The protein is Large ribosomal subunit protein uL22 of Thermosynechococcus vestitus (strain NIES-2133 / IAM M-273 / BP-1).